The chain runs to 803 residues: Urocanate reductase (803 aa).

The residue at position 258 (Ser-258) is an FMN phosphoryl serine. 7 residues coordinate FAD: Ala-311, Glu-330, Asn-338, Thr-339, Gly-343, Gly-344, and Asp-573. Residue Arg-632 is the Proton donor of the active site. Positions 739, 768, 783, and 784 each coordinate FAD.

Belongs to the FAD-dependent oxidoreductase 2 family. FRD/SDH subfamily. FAD is required as a cofactor. Requires FMN as cofactor.

It carries out the reaction dihydrourocanate + A = urocanate + AH2. Functionally, catalyzes the two-electron reduction of urocanate to dihydrourocanate (also named imidazole propionate or deamino-histidine). Dihydrourocanate is present at higher concentrations in subjects with type 2 diabetes, and directly impairs glucose tolerance and insulin signaling at the level of insulin receptor substrate (IRS) through activation of p38 gamma (MAPK12)-p62-mTORC1. Therefore, the UrdA enzyme from the gut bacteria S.mutans strain UA159 may contribute to the pathogenesis of type 2 diabetes by producing the microbial metabolite dihydrourocanate. The polypeptide is Urocanate reductase (Streptococcus mutans serotype c (strain ATCC 700610 / UA159)).